Consider the following 179-residue polypeptide: Interleukin-10 (179 aa).

Positions 1–19 (MPSSSALLCCLVFLAGVAA) are cleaved as a signal peptide. 2 cysteine pairs are disulfide-bonded: Cys31/Cys127 and Cys81/Cys133. Asn135 is a glycosylation site (N-linked (GlcNAc...) asparagine).

The protein belongs to the IL-10 family. Homodimer. Interacts with IL10RA and IL10RB.

Its subcellular location is the secreted. In terms of biological role, major immune regulatory cytokine that acts on many cells of the immune system where it has profound anti-inflammatory functions, limiting excessive tissue disruption caused by inflammation. Mechanistically, IL10 binds to its heterotetrameric receptor comprising IL10RA and IL10RB leading to JAK1 and STAT2-mediated phosphorylation of STAT3. In turn, STAT3 translocates to the nucleus where it drives expression of anti-inflammatory mediators. Targets antigen-presenting cells (APCs) such as macrophages and monocytes and inhibits their release of pro-inflammatory cytokines including granulocyte-macrophage colony-stimulating factor /GM-CSF, granulocyte colony-stimulating factor/G-CSF, IL-1 alpha, IL-1 beta, IL-6, IL-8 and TNF-alpha. Also interferes with antigen presentation by reducing the expression of MHC-class II and co-stimulatory molecules, thereby inhibiting their ability to induce T cell activation. In addition, controls the inflammatory response of macrophages by reprogramming essential metabolic pathways including mTOR signaling. This chain is Interleukin-10 (IL10), found in Cervus elaphus (Red deer).